The primary structure comprises 251 residues: HTH-type transcriptional regulator UlaR (251 aa).

An HTH deoR-type domain is found at 3-58 (EAQRHQILLEMLAQLGFVTVEKVVERLGISPATARRDINKLDERGKLKKVRNGAEA). The segment at residues 20–39 (VTVEKVVERLGISPATARRD) is a DNA-binding region (H-T-H motif).

It is found in the cytoplasm. Its function is as follows. Represses ulaG and the ulaABCDEF operon. The chain is HTH-type transcriptional regulator UlaR from Shigella sonnei (strain Ss046).